Here is a 393-residue protein sequence, read N- to C-terminus: Chorismate synthase (393 aa).

2 residues coordinate NADP(+): Arg-40 and Arg-46. FMN contacts are provided by residues 135–137 (RAS), 257–258 (QA), Gly-301, 316–320 (KPIAT), and Arg-342. The interval 280–306 (DEIDVGPDGIRRRSNRAGGVEGGMSTG) is disordered.

It belongs to the chorismate synthase family. Homotetramer. FMNH2 serves as cofactor.

The enzyme catalyses 5-O-(1-carboxyvinyl)-3-phosphoshikimate = chorismate + phosphate. It participates in metabolic intermediate biosynthesis; chorismate biosynthesis; chorismate from D-erythrose 4-phosphate and phosphoenolpyruvate: step 7/7. In terms of biological role, catalyzes the anti-1,4-elimination of the C-3 phosphate and the C-6 proR hydrogen from 5-enolpyruvylshikimate-3-phosphate (EPSP) to yield chorismate, which is the branch point compound that serves as the starting substrate for the three terminal pathways of aromatic amino acid biosynthesis. This reaction introduces a second double bond into the aromatic ring system. This chain is Chorismate synthase, found in Thermobifida fusca (strain YX).